The following is a 328-amino-acid chain: tRNA uridine(34) hydroxylase (328 aa).

The Rhodanese domain maps to 130 to 224 (LDEDTVVLDT…YGKDPEVQGE (95 aa)). Cysteine 184 serves as the catalytic Cysteine persulfide intermediate.

Belongs to the TrhO family.

The catalysed reaction is uridine(34) in tRNA + AH2 + O2 = 5-hydroxyuridine(34) in tRNA + A + H2O. Catalyzes oxygen-dependent 5-hydroxyuridine (ho5U) modification at position 34 in tRNAs. The chain is tRNA uridine(34) hydroxylase from Streptococcus agalactiae serotype Ia (strain ATCC 27591 / A909 / CDC SS700).